The sequence spans 179 residues: Ribosome maturation factor RimM (179 aa).

The 77-residue stretch at 100-176 (KEEFHLLELI…FLIINPPNGL (77 aa)) folds into the PRC barrel domain.

The protein belongs to the RimM family. In terms of assembly, binds ribosomal protein uS19.

The protein resides in the cytoplasm. Its function is as follows. An accessory protein needed during the final step in the assembly of 30S ribosomal subunit, possibly for assembly of the head region. Essential for efficient processing of 16S rRNA. May be needed both before and after RbfA during the maturation of 16S rRNA. It has affinity for free ribosomal 30S subunits but not for 70S ribosomes. This chain is Ribosome maturation factor RimM, found in Prochlorococcus marinus (strain AS9601).